The chain runs to 435 residues: Serine/threonine-protein kinase ssn3 (435 aa).

One can recognise a Protein kinase domain in the interval 49–377 (YRIVGFISSG…AREALEHPYF (329 aa)). ATP contacts are provided by residues 55 to 63 (ISSGTYGRV) and Lys-79. Asp-181 functions as the Proton acceptor in the catalytic mechanism. The segment covering 398–407 (RRVTQDDNDI) has biased composition (basic and acidic residues). The interval 398 to 435 (RRVTQDDNDIRSGSLPGTKRSGLPDDSLMGRASKRIKE) is disordered.

Belongs to the protein kinase superfamily. CMGC Ser/Thr protein kinase family. CDC2/CDKX subfamily. As to quaternary structure, component of the srb8-11 complex, a regulatory module of the Mediator complex. It depends on Mg(2+) as a cofactor.

The protein resides in the nucleus. The catalysed reaction is L-seryl-[protein] + ATP = O-phospho-L-seryl-[protein] + ADP + H(+). It carries out the reaction L-threonyl-[protein] + ATP = O-phospho-L-threonyl-[protein] + ADP + H(+). It catalyses the reaction [DNA-directed RNA polymerase] + ATP = phospho-[DNA-directed RNA polymerase] + ADP + H(+). Functionally, component of the srb8-11 complex. The srb8-11 complex is a regulatory module of the Mediator complex which is itself involved in regulation of basal and activated RNA polymerase II-dependent transcription. The srb8-11 complex may be involved in the transcriptional repression of a subset of genes regulated by Mediator. It may inhibit the association of the Mediator complex with RNA polymerase II to form the holoenzyme complex. The srb8-11 complex phosphorylates the C-terminal domain (CTD) of the largest subunit of RNA polymerase II. The protein is Serine/threonine-protein kinase ssn3 (ssn3) of Aspergillus terreus (strain NIH 2624 / FGSC A1156).